Consider the following 655-residue polypeptide: Spastin (655 aa).

The Cytoplasmic segment spans residues 1–58 (MLFDLINSFLKNGINNSNNNNNNNNNKNNFYNSLEDDDYLLNNQTTKVSLYLYFFIFA). Positions 59 to 79 (FMFLVVDLIMLYYKHRENIES) form an intramembrane region, helical. Topologically, residues 80–655 (RETDLSLKLN…EKWNQKFGTI (576 aa)) are cytoplasmic. Positions 102-140 (KSSPTTSTTTTTITPTTTSSSQLRQPSTPKTTTKTINSP) are enriched in low complexity. Residues 102–151 (KSSPTTSTTTTTITPTTTSSSQLRQPSTPKTTTKTINSPPSTPKSPPPLP) form a disordered region. Pro residues predominate over residues 141–151 (PSTPKSPPPLP). The MIT domain occupies 169 to 232 (LNEAKSQIDS…KRAEYLKNEL (64 aa)). The disordered stretch occupies residues 261–325 (EQQQQQQQQS…TITSPGNKYG (65 aa)). Residues 262 to 320 (QQQQQQQQSSSTYRNSLNLSSSKSNSTINNRHSISSLSSLNSTTATTTTPSNTSTITSP) show a composition bias toward low complexity. 424–431 (GPPGNGKT) is a binding site for ATP.

The protein belongs to the AAA ATPase family. Spastin subfamily. As to quaternary structure, homohexamer. The homohexamer is stabilized by ATP-binding. The homohexamer may adopt a ring conformation through which microtubules pass prior to being severed. Interacts with microtubules.

It localises to the membrane. Its subcellular location is the cytoplasm. The protein localises to the cytoskeleton. It is found in the microtubule organizing center. The protein resides in the centrosome. It carries out the reaction n ATP + n H2O + a microtubule = n ADP + n phosphate + (n+1) alpha/beta tubulin heterodimers.. Its function is as follows. ATP-dependent microtubule severing protein. Microtubule severing may promote reorganization of cellular microtubule arrays and the release of microtubules from the microtubule organizing center following nucleation. This chain is Spastin, found in Dictyostelium discoideum (Social amoeba).